Here is a 1828-residue protein sequence, read N- to C-terminus: InaD-like protein (1828 aa).

The L27 domain maps to 5 to 65 (PAPDKLQVLQ…SIKQLKGQLS (61 aa)). 3 PDZ domains span residues 134-221 (YIDI…AREP), 248-328 (DVEL…ARDP), and 365-453 (GVEL…VRRK). Ser-459 and Ser-522 each carry phosphoserine. Residues 553 to 639 (DAELQKYSKL…PFTLVCCRRL (87 aa)) form the PDZ 4 domain. At Ser-645 the chain carries Phosphoserine. 2 consecutive PDZ domains span residues 686–758 (IVEL…EVLK) and 1070–1162 (IVEI…QSLS). The interval 1168 to 1220 (IPSVHNKANKIANNQDQNTEEKKEKRQGTPPPPMKLPPPYKAPSDDSDENEEE) is disordered. A compositionally biased stretch (pro residues) spans 1196–1208 (TPPPPMKLPPPYK). Ser-1211 is subject to Phosphoserine. The PDZ 7 domain occupies 1241–1324 (IIELEKDKNG…KVKLVFIRNE (84 aa)). Residues 1333-1362 (APFPVPSSSPSSLEDQSGTEPVSSEEDGSL) are disordered. Over residues 1345–1354 (LEDQSGTEPV) the composition is skewed to polar residues. PDZ domains lie at 1464–1547 (IIEI…YRDE) and 1560–1642 (PVDL…GRLR). At Thr-1535 the chain carries Phosphothreonine. A compositionally biased stretch (polar residues) spans 1645–1668 (SWTSSRKTSQNSQGSQHSTHSSFH). Residues 1645-1669 (SWTSSRKTSQNSQGSQHSTHSSFHP) form a disordered region. The region spanning 1703–1789 (TVEIIRELSD…RIILQVVADT (87 aa)) is the PDZ 10 domain. The segment at 1805-1828 (YHLGSPTAEHHPEDTEEPLQMTAG) is disordered.

As to quaternary structure, forms a ternary complex with PALS1 and CRB1. Component of a complex whose core is composed of ARHGAP17, AMOT, PALS1, INADL/PATJ and PARD3/PAR3. Forms a heterotrimeric complex composed of MMP5, LIN7B and PATJ; the N-terminal L27 domain of PALS1 interacts with the L27 domain of PATJ and the C-terminal L27 domain of PALS1 interacts with the L27 domain of LIN7B. Component of a complex composed of CRB3, PALS1 and PATJ. As part of the Crumbs complex; interacts with WWP1, the interaction is enhanced by AMOTL2 and facilitates WWP1 localization to the plasma membrane. The Crumbs complex promotes monoubiquitination of AMOTL2 by WWP1, which activates the Hippo signaling pathway. Interacts (via N-terminus) with PALS1/PALS (via PDZ domain). Interacts with TJP3/ZO-3 and CLDN1/claudin-1. Interacts with ASIC3, KCNJ10, KCNJ15, GRIN2A, GRIN2B, GRIN2C, GRIN2D, NLGN2, and HTR2A. Interacts with MPP7. Directly interacts with HTR4. Interacts (via PDZ domain 8) with WWC1 (via the ADDV motif). Interacts with SLC6A4. Interacts (via C-terminus) with ARHGEF18. Interacts with NPHP1. Interacts with PARD3/PAR3. Interacts (via PDZ1-6 domains) with TJP1/ZO1; the interaction is required for attachment and extension of TJP1/ZO1 condensates along the apical cell interface.

Its subcellular location is the cell junction. It is found in the tight junction. The protein localises to the apical cell membrane. It localises to the cytoplasm. The protein resides in the perinuclear region. Functionally, scaffolding protein that facilitates the localization of proteins to the cell membrane. Required for the correct formation of tight junctions and epithelial apico-basal polarity. Acts (via its L27 domain) as an apical connector and elongation factor for multistranded TJP1/ZO1 condensates that form a tight junction belt, thereby required for the formation of the tight junction-mediated cell barrier. Positively regulates epithelial cell microtubule elongation and cell migration, possibly via facilitating localization of PRKCI/aPKC and PAR3D/PAR3 at the leading edge of migrating cells. Plays a role in the correct reorientation of the microtubule-organizing center during epithelial migration. May regulate the surface expression and/or function of ASIC3 in sensory neurons. May recruit ARHGEF18 to apical cell-cell boundaries. This Canis lupus familiaris (Dog) protein is InaD-like protein.